The primary structure comprises 192 residues: Ion-translocating oxidoreductase complex subunit B (192 aa).

The segment at 1–26 is hydrophobic; that stretch reads MTAIWIAIAALSALALAFGLVLGYAS. Residues 32-91 form the 4Fe-4S domain; it reads ENDPIVEEVEAMLPQSQCGQCGYPGCRPYAEAVSLNGESINKCGPGGEAMMLKLAEKLNV. [4Fe-4S] cluster contacts are provided by Cys49, Cys52, Cys57, Cys74, Cys117, Cys120, Cys123, Cys127, Cys147, Cys150, Cys153, and Cys157. 4Fe-4S ferredoxin-type domains lie at 108–137 and 138–167; these read HVAWIDESNCIGCTKCIQACPVDAIIGSTK and AVHTVVSDLCTGCDLCISPCPTDCIELRPI.

It belongs to the 4Fe4S bacterial-type ferredoxin family. RnfB subfamily. In terms of assembly, the complex is composed of six subunits: RnfA, RnfB, RnfC, RnfD, RnfE and RnfG. [4Fe-4S] cluster is required as a cofactor.

It localises to the cell inner membrane. Functionally, part of a membrane-bound complex that couples electron transfer with translocation of ions across the membrane. The sequence is that of Ion-translocating oxidoreductase complex subunit B from Pectobacterium atrosepticum (strain SCRI 1043 / ATCC BAA-672) (Erwinia carotovora subsp. atroseptica).